We begin with the raw amino-acid sequence, 157 residues long: BPTI/Kunitz domain-containing protein 3 (157 aa).

An N-terminal signal peptide occupies residues Met-1–Cys-16. 2 consecutive BPTI/Kunitz inhibitor domains span residues Cys-42–Cys-95 and Cys-97–Cys-151. 5 disulfide bridges follow: Cys-42-Cys-95, Cys-70-Cys-91, Cys-97-Cys-151, Cys-107-Cys-134, and Cys-126-Cys-147.

As to expression, nacreous layer of shell (at protein level).

The protein localises to the secreted. The polypeptide is BPTI/Kunitz domain-containing protein 3 (Margaritifera margaritifera (Freshwater pearl mussel)).